The following is a 300-amino-acid chain: Zinc finger protein RME1 (300 aa).

The span at 80 to 90 (QAYDSTSSTEE) shows a compositional bias: polar residues. The segment at 80-100 (QAYDSTSSTEEGTAPQLRPDE) is disordered. 3 C2H2-type zinc fingers span residues 178 to 199 (YHCSHCSEKFATLVEFAAHLDE), 206 to 234 (CKCPIEQCPWKILGFQQATGLRRHCASQH), and 256 to 281 (LNCPFPICQKTFRRKDAYKRHVAMVH).

It localises to the nucleus. Its function is as follows. Involved in the control of meiosis. Represses the transcription of the IME1 gene thereby inhibiting cells from entering meiosis. But also activates the CLN2 gene thus promoting mitosis. The chain is Zinc finger protein RME1 (RME1) from Saccharomyces cerevisiae (strain ATCC 204508 / S288c) (Baker's yeast).